Consider the following 124-residue polypeptide: Large ribosomal subunit protein uL18 (124 aa).

The protein belongs to the universal ribosomal protein uL18 family. In terms of assembly, part of the 50S ribosomal subunit; part of the 5S rRNA/L5/L18/L25 subcomplex. Contacts the 5S and 23S rRNAs.

This is one of the proteins that bind and probably mediate the attachment of the 5S RNA into the large ribosomal subunit, where it forms part of the central protuberance. The sequence is that of Large ribosomal subunit protein uL18 from Thermomicrobium roseum (strain ATCC 27502 / DSM 5159 / P-2).